Consider the following 376-residue polypeptide: Tetraacyldisaccharide 4'-kinase (376 aa).

51–58 is an ATP binding site; it reads AVGGTGKT.

This sequence belongs to the LpxK family.

It carries out the reaction a lipid A disaccharide + ATP = a lipid IVA + ADP + H(+). It functions in the pathway glycolipid biosynthesis; lipid IV(A) biosynthesis; lipid IV(A) from (3R)-3-hydroxytetradecanoyl-[acyl-carrier-protein] and UDP-N-acetyl-alpha-D-glucosamine: step 6/6. Its function is as follows. Transfers the gamma-phosphate of ATP to the 4'-position of a tetraacyldisaccharide 1-phosphate intermediate (termed DS-1-P) to form tetraacyldisaccharide 1,4'-bis-phosphate (lipid IVA). The polypeptide is Tetraacyldisaccharide 4'-kinase (Bacteroides fragilis (strain YCH46)).